Here is a 376-residue protein sequence, read N- to C-terminus: Protein RecA (376 aa).

79-86 (GPESSGKT) provides a ligand contact to ATP. The tract at residues 357 to 376 (AAARAATDKPVETKGANAAA) is disordered.

Belongs to the RecA family.

Its subcellular location is the cytoplasm. Can catalyze the hydrolysis of ATP in the presence of single-stranded DNA, the ATP-dependent uptake of single-stranded DNA by duplex DNA, and the ATP-dependent hybridization of homologous single-stranded DNAs. It interacts with LexA causing its activation and leading to its autocatalytic cleavage. The chain is Protein RecA from Synechococcus sp. (strain CC9902).